The primary structure comprises 529 residues: Auxin response factor 13 (529 aa).

The segment at 1–22 (MARPPAATAPPPPPPPPPPPPP) is disordered. The segment covering 7–22 (ATAPPPPPPPPPPPPP) has biased composition (pro residues). Residues 128–234 (YAKQLTQSDA…KLLVGVRRAA (107 aa)) constitute a DNA-binding region (TF-B3). Disordered regions lie at residues 443 to 462 (IVTPQNGSPPDNPVNTPLSA) and 497 to 529 (PEGVDDETATEEASDTSLPDSLTNGHNQDGARL). Residues 444 to 461 (VTPQNGSPPDNPVNTPLS) are compositionally biased toward polar residues. The span at 499–510 (GVDDETATEEAS) shows a compositional bias: acidic residues. A compositionally biased stretch (polar residues) spans 511 to 523 (DTSLPDSLTNGHN).

The protein belongs to the ARF family. Homo and heterodimers. In terms of tissue distribution, expressed in roots, culms, leaves and young panicles.

It is found in the nucleus. Its function is as follows. Auxin response factors (ARFs) are transcriptional factors that bind specifically to the DNA sequence 5'-TGTCTC-3' found in the auxin-responsive promoter elements (AuxREs). This is Auxin response factor 13 (ARF13) from Oryza sativa subsp. japonica (Rice).